We begin with the raw amino-acid sequence, 326 residues long: Ornithine carbamoyltransferase (326 aa).

Carbamoyl phosphate-binding positions include 54–57 (STRT), glutamine 81, arginine 105, and 132–135 (HPTQ). L-ornithine-binding positions include asparagine 164, aspartate 225, and 229-230 (SM). Residues 266 to 267 (CL) and arginine 311 contribute to the carbamoyl phosphate site.

It belongs to the aspartate/ornithine carbamoyltransferase superfamily. OTCase family.

Its subcellular location is the cytoplasm. It carries out the reaction carbamoyl phosphate + L-ornithine = L-citrulline + phosphate + H(+). Its pathway is amino-acid biosynthesis; L-arginine biosynthesis; L-arginine from L-ornithine and carbamoyl phosphate: step 1/3. Functionally, reversibly catalyzes the transfer of the carbamoyl group from carbamoyl phosphate (CP) to the N(epsilon) atom of ornithine (ORN) to produce L-citrulline. The polypeptide is Ornithine carbamoyltransferase (argF) (Streptococcus mutans serotype c (strain ATCC 700610 / UA159)).